Here is a 210-residue protein sequence, read N- to C-terminus: Thymidylate kinase (210 aa).

10 to 17 is a binding site for ATP; it reads GPEGAGKS.

It belongs to the thymidylate kinase family.

The catalysed reaction is dTMP + ATP = dTDP + ADP. Phosphorylation of dTMP to form dTDP in both de novo and salvage pathways of dTTP synthesis. The protein is Thymidylate kinase of Pseudomonas entomophila (strain L48).